The following is a 306-amino-acid chain: UDP-3-O-acyl-N-acetylglucosamine deacetylase (306 aa).

H79, H238, and D242 together coordinate Zn(2+). H265 serves as the catalytic Proton donor.

Belongs to the LpxC family. Zn(2+) is required as a cofactor.

It catalyses the reaction a UDP-3-O-[(3R)-3-hydroxyacyl]-N-acetyl-alpha-D-glucosamine + H2O = a UDP-3-O-[(3R)-3-hydroxyacyl]-alpha-D-glucosamine + acetate. It functions in the pathway glycolipid biosynthesis; lipid IV(A) biosynthesis; lipid IV(A) from (3R)-3-hydroxytetradecanoyl-[acyl-carrier-protein] and UDP-N-acetyl-alpha-D-glucosamine: step 2/6. Functionally, catalyzes the hydrolysis of UDP-3-O-myristoyl-N-acetylglucosamine to form UDP-3-O-myristoylglucosamine and acetate, the committed step in lipid A biosynthesis. The chain is UDP-3-O-acyl-N-acetylglucosamine deacetylase from Shewanella baltica (strain OS223).